The sequence spans 534 residues: ATP-dependent RNA helicase DBP3 (534 aa).

Residues 1 to 96 form a disordered region; that stretch reads MGSKRKHESG…VSSSSSGYTQ (96 aa). The span at 8-30 shows a compositional bias: basic and acidic residues; it reads ESGDVEVKKPKHDNEVKGKEKKE. Basic residues predominate over residues 31-53; that stretch reads KKEKKEKKEKKEKKEKKEKKEKK. The span at 54 to 63 shows a compositional bias: basic and acidic residues; the sequence is EKKEKNEKKE. Low complexity predominate over residues 82 to 92; the sequence is STVSTVSSSSS. The Q motif motif lies at 131–157; the sequence is LSFDHVQLQSKIAPIVTKFPKPTPIQS. Positions 160–330 constitute a Helicase ATP-binding domain; sequence WPYLLNGDDV…ATFMNKAVKV (171 aa). ATP is bound at residue 173 to 180; that stretch reads AETGSGKT. Positions 278 to 281 match the DEAD box motif; sequence DEAD. The Helicase C-terminal domain maps to 359–504; the sequence is RLLQLLRQYG…PVPDELLKFG (146 aa).

This sequence belongs to the DEAD box helicase family. DDX5/DBP2 subfamily.

Its subcellular location is the nucleus. The protein localises to the nucleolus. The catalysed reaction is ATP + H2O = ADP + phosphate + H(+). Its function is as follows. ATP-dependent RNA helicase required for 60S ribosomal subunit synthesis. Involved in efficient pre-rRNA processing, predominantly at site A3, which is necessary for the normal formation of 25S and 5.8S rRNAs. The sequence is that of ATP-dependent RNA helicase DBP3 (DBP3) from Meyerozyma guilliermondii (strain ATCC 6260 / CBS 566 / DSM 6381 / JCM 1539 / NBRC 10279 / NRRL Y-324) (Yeast).